A 123-amino-acid chain; its full sequence is Small ribosomal subunit protein uS12 (123 aa).

The segment at 9-32 is disordered; that stretch reads ANPREVQKSRKKVPALQQSPQKRG. D89 bears the 3-methylthioaspartic acid mark.

It belongs to the universal ribosomal protein uS12 family. In terms of assembly, part of the 30S ribosomal subunit. Contacts proteins S8 and S17. May interact with IF1 in the 30S initiation complex.

Functionally, with S4 and S5 plays an important role in translational accuracy. Interacts with and stabilizes bases of the 16S rRNA that are involved in tRNA selection in the A site and with the mRNA backbone. Located at the interface of the 30S and 50S subunits, it traverses the body of the 30S subunit contacting proteins on the other side and probably holding the rRNA structure together. The combined cluster of proteins S8, S12 and S17 appears to hold together the shoulder and platform of the 30S subunit. This is Small ribosomal subunit protein uS12 from Bradyrhizobium sp. (strain BTAi1 / ATCC BAA-1182).